We begin with the raw amino-acid sequence, 87 residues long: Putative sodium channel toxin Ts38 (87 aa).

Residues 1–22 (MKHLKFYSILFLFSIFVYKVNA) form the signal peptide. 3 cysteine pairs are disulfide-bonded: Cys42–Cys65, Cys51–Cys72, and Cys55–Cys74.

This sequence belongs to the long (3 C-C) scorpion toxin superfamily. Sodium channel inhibitor family. Expressed by the venom gland.

It localises to the secreted. Functionally, putative sodium channel toxin. This Tityus serrulatus (Brazilian scorpion) protein is Putative sodium channel toxin Ts38.